The sequence spans 151 residues: Methylated-DNA--protein-cysteine methyltransferase (151 aa).

Residue C119 is the Nucleophile; methyl group acceptor of the active site.

Belongs to the MGMT family.

The protein resides in the cytoplasm. It catalyses the reaction a 6-O-methyl-2'-deoxyguanosine in DNA + L-cysteinyl-[protein] = S-methyl-L-cysteinyl-[protein] + a 2'-deoxyguanosine in DNA. The catalysed reaction is a 4-O-methyl-thymidine in DNA + L-cysteinyl-[protein] = a thymidine in DNA + S-methyl-L-cysteinyl-[protein]. Involved in the cellular defense against the biological effects of O6-methylguanine (O6-MeG) and O4-methylthymine (O4-MeT) in DNA. Repairs the methylated nucleobase in DNA by stoichiometrically transferring the methyl group to a cysteine residue in the enzyme. This is a suicide reaction: the enzyme is irreversibly inactivated. This chain is Methylated-DNA--protein-cysteine methyltransferase, found in Saccharolobus islandicus (strain L.S.2.15 / Lassen #1) (Sulfolobus islandicus).